Consider the following 273-residue polypeptide: Pre-mRNA-splicing factor CWC23 (273 aa).

The region spanning 15–87 (DLYALLEVSI…SLRATYNRWL (73 aa)) is the J domain.

This sequence belongs to the DnaJ family. Associated with the spliceosome.

Its subcellular location is the cytoplasm. The protein resides in the nucleus. In terms of biological role, involved in pre-mRNA splicing. May be involved in endoplasmic reticulum-associated protein degradation (ERAD) and required for growth at low and high temperatures. The polypeptide is Pre-mRNA-splicing factor CWC23 (CWC23) (Eremothecium gossypii (strain ATCC 10895 / CBS 109.51 / FGSC 9923 / NRRL Y-1056) (Yeast)).